The following is a 218-amino-acid chain: Large ribosomal subunit protein bL25 (218 aa).

It belongs to the bacterial ribosomal protein bL25 family. CTC subfamily. Part of the 50S ribosomal subunit; part of the 5S rRNA/L5/L18/L25 subcomplex. Contacts the 5S rRNA. Binds to the 5S rRNA independently of L5 and L18.

In terms of biological role, this is one of the proteins that binds to the 5S RNA in the ribosome where it forms part of the central protuberance. This chain is Large ribosomal subunit protein bL25, found in Gluconobacter oxydans (strain 621H) (Gluconobacter suboxydans).